Here is a 153-residue protein sequence, read N- to C-terminus: uncharacterized protein (153 aa).

2 disordered regions span residues 30–66 and 79–153; these read GPTV…RKGD and IKEN…DYDD. Residues 45–56 are compositionally biased toward acidic residues; it reads EDSDGSDKEDEQ. Composition is skewed to polar residues over residues 106 to 116 and 130 to 144; these read GDTTSGVNACS and GTKS…SSLL.

This is an uncharacterized protein from Xenopus laevis (African clawed frog).